Consider the following 325-residue polypeptide: Terpene synthase 11 (325 aa).

A DDxx(x)D/E motif motif is present at residues 97–102 (DDEYLE). The NDxxSxxxD/E motif motif lies at 227–235 (NDIYSFVKE).

The protein belongs to the terpene synthase family.

It catalyses the reaction (2E,6E)-farnesyl diphosphate = (E)-beta-farnesene + diphosphate. The enzyme catalyses (2E,6E)-farnesyl diphosphate = (3E,6E)-alpha-farnesene + diphosphate. The catalysed reaction is geranylgeranyl diphosphate + H2O = (S)-(+)-nephthenol + diphosphate. Terpene synthase that converts its substrate farnesyl diphosphate (FPP) into the sesquiterpenes (E)-beta-farnesene and (E,E)-alpha-farnesene. TPS11 also converts geranylgeranyl diphosphate (GGPP) into the diterpene (S)-nephthenol. The chain is Terpene synthase 11 from Dictyostelium purpureum (Slime mold).